The chain runs to 1692 residues: MDQSKRLLKSAVPNPPEHFKTGISWLDDLDEKDDDSATSVNYDIPEITEANLCNDSHEALSPCTQPVGNSGRPVEAFKTYPSTPAVPSKSVLFHFYEPDENFSLSDTGRTKSDTALAARESSEKSEVPRDTRSAGIKPYKENNSSNCAISKEAGLRRLIDKDRESFDKNLNQSFTNLTFPEPISDDSDSVEFQRDSLNNNWPASLEGSIHELPRNSDDDGIPASAAHILDLDYHRDSYDSPWKKFLPYPSILSDDSWKAPESWGTSLPTEAIPKQVFTTRFFARPSLGNRKKEFFLRVYRDDRTSVSFICPIGIQTHEVIKLLARLFFLPSSANFYLLLIQFNTERILLPHEQPCIIFERLLSLFGCKVTSDEEINEEDNYSVARLVFTTMDIGADVLRKFSEKKITANLDISRSNLEVIPVKIYPYAHELISLNVSHNLSLDLPLDFMERCVKLKRLDISNNLRSPRGKPITALRQLEVLNMSRNDIYELDPLIFSGLSRNSLKELNIANNKLFFLPHSTRYLVNLTYLDLSYNNFVTFPLIITELSQLETLNFSHNLLSQISSKIGSLVKLKHLYLQFNDLSNRLPQEIGLLKNLETIDLSYNAITNIASLSECPKLNSINVACNLLSFYEYSNPSATFIDFSFCPLTTIDPAFSYSNLVYFDISHAKLIGLKDSVIETLVNVETVKVNYNHFTSISDAISAMQNLKYLSCTNCEMSYVSPNLGKLKHLVHLDLHANNIKIFPEEVWQVSSLKVVNLSSNILEKIKLPVATSKKLTRTISQLKIMRTLSGNPVSSLSSQEFVMPTVEELYLVDNRLGNDCFTALEYFKCLKVLNLSYNYLTEIPSKFFQNFSDLKHLFVSGNELANLSISSTAQVLLETLYANGNRLSSFPKNEALSKSLRFLDISTNNLQNLAVEKAEKKSLTKLPQLEYLNLSGNTWFRFSEHEDTNFTKSYLKNLKFLSIMDLNTKFSNAPSDVLNHFIQRNSPQPNILRYGVCGYLSRSIPVISACELVVNNFLHPQSSLYCVLDSDISAGKNNRVLKFVYDNLASCLAHEINAADSSSEQICNALRRGFLRLNKKLGNVIHYDLRKSSEGDVDSNYVTTMNISEKGYSMDSSCLDIGVSIILVYVRDTRAFVANVGTSMAIMSTRNDSEPTTLSVMHDVYNRDEIRRIVDSCGFISGEIKSTTTRAIGRLSQFPGVQAVPYVNVQYLSELNEFIILANQEFWSVLSKRTVIDVVRANRHSPLLASTKLRDYAIAYGAEKNVLVVIVELNGLFEENSLNFNQLRGDEKTLAISEKNDNMSFVQDLPDDSSLARMNREVSPPKGCIAMVFTDIKNSTLLWERHPIAMRSAIKTHNTIMRRQLRATGGYEVKTEGDAFMVCFQTVPAALLWCFSVQLQLLSADWPNEIVESVQGRLVLGSKNEVLYRGLSVRIGVNYGVTVSELDPITRRMDYYGPVVNRTSRVVSVADGGQIAVSAEVVSVLNQLDSETMSSEKTNVNEMEVRALKQIGYIIHNLGEFKLKGLDTTEMISLVYPVQLQGRLERLIKSRSLGTPTALPETQTYTPVRSRSNSLRPMLARLSDSKSVHGEEGGSGKRSVSSLRNVSPSESTGGYEGCIFDDQQYQLLYELCERLEDHAAILHGFPEPPPCDTGLAAPVNQAEEYSLFYRLTLRIENTIYCVSQMLGHTG.

Disordered regions lie at residues 1–22 and 103–142; these read MDQS…FKTG and SLSD…YKEN. The span at 120–132 shows a compositional bias: basic and acidic residues; that stretch reads ESSEKSEVPRDTR. The required for interaction with gpa2 stretch occupies residues 174-195; it reads FTNLTFPEPISDDSDSVEFQRD. The Ras-associating domain occupies 292–380; the sequence is KEFFLRVYRD…SDEEINEEDN (89 aa). LRR repeat units lie at residues 430–450, 454–474, 477–498, 503–524, 526–547, 549–570, 572–594, 596–617, 618–639, 660–681, 684–705, 707–729, 730–751, 753–774, 783–805, 807–827, 831–852, 855–876, 878–899, 901–922, and 930–951; these read ELIS…DFME, KLKR…PITA, QLEV…IFSG, SLKE…TRYL, NLTY…ITEL, QLET…IGSL, KLKH…IGLL, NLET…SECP, KLNS…NPSA, NLVY…VIET, NVET…ISAM, NLKY…GKLK, HLVH…VWQV, SLKV…VATS, QLKI…EFVM, TVEE…TALE, CLKV…FFQN, DLKH…STAQ, LLET…EALS, SLRF…KAEK, and QLEY…EDTN. The PPM-type phosphatase domain occupies 995 to 1275; it reads RYGVCGYLSR…KNVLVVIVEL (281 aa). The 138-residue stretch at 1332–1469 folds into the Guanylate cyclase domain; sequence AMVFTDIKNS…PVVNRTSRVV (138 aa). 2 residues coordinate Mg(2+): Asp-1337 and Asp-1380. The Mn(2+) site is built by Asp-1337 and Asp-1380. The span at 1585 to 1597 shows a compositional bias: basic and acidic residues; that stretch reads SDSKSVHGEEGGS. Residues 1585 to 1614 form a disordered region; sequence SDSKSVHGEEGGSGKRSVSSLRNVSPSEST. Residues 1600-1614 show a composition bias toward polar residues; that stretch reads RSVSSLRNVSPSEST.

It belongs to the adenylyl cyclase class-3 family. Interacts (via N-terminus) with gpa2; the interaction is direct and serves to activate adenylate cyclase and cAMP-PKA signaling, to repress sexual development and gluconeogenesis. Interacts with git1. It depends on Mn(2+) as a cofactor.

It is found in the cytoplasm. It carries out the reaction ATP = 3',5'-cyclic AMP + diphosphate. Activated by binding G protein gpa2. Activated by git1. In contrast to yeast cyclase, S.pombe cyclase is not likely to be regulated by RAS proteins. Functionally, acts in glucose-induced cAMP signaling by catalyzing the synthesis of the second messenger, cAMP to activate PKA signaling and repress sexual development and gluconeogenesis. This Schizosaccharomyces pombe (strain 972 / ATCC 24843) (Fission yeast) protein is Adenylate cyclase.